The sequence spans 299 residues: tRNA dimethylallyltransferase (299 aa).

G11–S18 contributes to the ATP binding site. T13–S18 is a binding site for substrate.

This sequence belongs to the IPP transferase family. As to quaternary structure, monomer. Mg(2+) serves as cofactor.

It carries out the reaction adenosine(37) in tRNA + dimethylallyl diphosphate = N(6)-dimethylallyladenosine(37) in tRNA + diphosphate. Catalyzes the transfer of a dimethylallyl group onto the adenine at position 37 in tRNAs that read codons beginning with uridine, leading to the formation of N6-(dimethylallyl)adenosine (i(6)A). This Pseudarthrobacter chlorophenolicus (strain ATCC 700700 / DSM 12829 / CIP 107037 / JCM 12360 / KCTC 9906 / NCIMB 13794 / A6) (Arthrobacter chlorophenolicus) protein is tRNA dimethylallyltransferase.